The sequence spans 446 residues: Phosphoglucosamine mutase (446 aa).

Catalysis depends on Ser101, which acts as the Phosphoserine intermediate. Ser101, Asp240, Asp242, and Asp244 together coordinate Mg(2+). Ser101 is subject to Phosphoserine.

The protein belongs to the phosphohexose mutase family. It depends on Mg(2+) as a cofactor. Post-translationally, activated by phosphorylation.

The enzyme catalyses alpha-D-glucosamine 1-phosphate = D-glucosamine 6-phosphate. Its function is as follows. Catalyzes the conversion of glucosamine-6-phosphate to glucosamine-1-phosphate. The protein is Phosphoglucosamine mutase of Coxiella burnetii (strain RSA 331 / Henzerling II).